The primary structure comprises 303 residues: Protoheme IX farnesyltransferase (303 aa).

Helical transmembrane passes span 25–45, 54–74, 118–138, 166–186, 230–250, and 280–300; these read MGLVQGNLIPAFAGAWLAIVM, IPQILLMLVGSTLIMGGACAL, CLFLLNIPSGVLGLIGIVGYV, IGWVAIDGSLSLAAVALFLVV, LVLLLPLPFLLSNLGVTFVVI, and FVYSLNYLVVFFALVVVVSLI.

It belongs to the UbiA prenyltransferase family. Protoheme IX farnesyltransferase subfamily. As to quaternary structure, interacts with CtaA.

The protein resides in the cell membrane. It carries out the reaction heme b + (2E,6E)-farnesyl diphosphate + H2O = Fe(II)-heme o + diphosphate. It participates in porphyrin-containing compound metabolism; heme O biosynthesis; heme O from protoheme: step 1/1. Its function is as follows. Converts heme B (protoheme IX) to heme O by substitution of the vinyl group on carbon 2 of heme B porphyrin ring with a hydroxyethyl farnesyl side group. In Staphylococcus epidermidis (strain ATCC 35984 / DSM 28319 / BCRC 17069 / CCUG 31568 / BM 3577 / RP62A), this protein is Protoheme IX farnesyltransferase.